A 156-amino-acid chain; its full sequence is Endoribonuclease YbeY (156 aa).

The Zn(2+) site is built by H122, H126, and H132.

Belongs to the endoribonuclease YbeY family. The cofactor is Zn(2+).

The protein localises to the cytoplasm. In terms of biological role, single strand-specific metallo-endoribonuclease involved in late-stage 70S ribosome quality control and in maturation of the 3' terminus of the 16S rRNA. The sequence is that of Endoribonuclease YbeY from Bacillus cereus (strain B4264).